Reading from the N-terminus, the 504-residue chain is Anaerobic nitric oxide reductase transcription regulator NorR (504 aa).

At Asp57 the chain carries 4-aspartylphosphate. Residues 187 to 416 (MIGLSPGMTQ…LEHAIHRAVV (230 aa)) enclose the Sigma-54 factor interaction domain. ATP is bound by residues 215 to 222 (GETGTGKE) and 278 to 287 (ADNGTLFLDE). Residues 479–498 (WAACARMLETDVANLHRLAK) constitute a DNA-binding region (H-T-H motif).

The protein operates within nitrogen metabolism; nitric oxide reduction. Its function is as follows. Required for the expression of anaerobic nitric oxide (NO) reductase, acts as a transcriptional activator for at least the norVW operon. Activation also requires sigma-54. This chain is Anaerobic nitric oxide reductase transcription regulator NorR, found in Escherichia coli O6:K15:H31 (strain 536 / UPEC).